The chain runs to 110 residues: MVSQETIKHVKDLIAENEIFVASKTYCPYCHAALNTLFEKLKVPRSKVLVLQLNDMKEGADIQAALYEINGQRTVPNIYINGKHIGGNDDLQELRETGELEELLEPILAN.

A Glutaredoxin domain is found at 7 to 110; it reads IKHVKDLIAE…EELLEPILAN (104 aa). Lys-11 participates in a covalent cross-link: Glycyl lysine isopeptide (Lys-Gly) (interchain with G-Cter in ubiquitin). Residues 24-29, Gln-63, Val-75, and 88-89 contribute to the glutathione site; these read KTYCPY and ND. Cys-27 carries the post-translational modification S-glutathionyl cysteine; alternate. The cysteines at positions 27 and 30 are disulfide-linked.

Belongs to the glutaredoxin family.

The protein localises to the cytoplasm. The protein resides in the nucleus. The catalysed reaction is 2 glutathione + H2O2 = glutathione disulfide + 2 H2O. It carries out the reaction 1-chloro-2,4-dinitrobenzene + glutathione = 2,4-dinitrophenyl-S-glutathione + chloride + H(+). The enzyme catalyses RX + glutathione = an S-substituted glutathione + a halide anion + H(+). Component of the glutathione system which performs several activities such as glutathione-dependent oxidoreductase, glutathione peroxidase and glutathione S-transferase (GST) activity. The disulfide bond functions as an electron carrier in the glutathione-dependent synthesis of deoxyribonucleotides by the enzyme ribonucleotide reductase. In addition, it is also involved in reducing cytosolic protein- and non-protein-disulfides in a coupled system with glutathione reductase. Required for resistance to reactive oxygen species (ROS) by directly reducing hydroperoxides and for the detoxification of ROS-mediated damage. GRX1 is less active as an oxidoreductase than GRX2. The polypeptide is Glutaredoxin-1 (GRX1) (Saccharomyces cerevisiae (strain ATCC 204508 / S288c) (Baker's yeast)).